The sequence spans 474 residues: MTTNSTYQPVHVIGGGLAGSEAAWQIAQSGVPVILHEMRKDDATGKVITDAHQTDGLAEMVCSNSFRSDDWQFNAVGLLHAEMRKLGSLIMSCADQHQVPAGGALAVDRDGFSTEVTKRLSQHPLVTIVREEIAGLPPAPDGKNGWDNVIVATGPLTSPALAQAVLDLTGEGQLSFFDAIAPIIHFESINMDIAWRQSRYDKEGPGGDAAAYINCPMNKEQYEAFIDALLAGPKSEFKEWENVPYFDGCLPIEVMAERGRETLRHGPMKPVGLTNPRDPLVKAYAIVQLRQDNALGTLWNMVGFQTKLKHGVQAETFRMIPGLEDAQFARLGGLHRNTFINSPKLLDKSLRMKAQPRLRFAGQVTGVEGYVESAAMGLLTGRFAAADRKGAPIDAPPPTTALGALVEHITGGHLEAGNGPGSFQPMNINYGLLPPLEAPKVDEDGKKIPLKERGRAKKRLMSLRALKDLDAWMA.

14–19 is an FAD binding site; it reads GGGLAG.

It belongs to the MnmG family. TrmFO subfamily. Requires FAD as cofactor.

The protein resides in the cytoplasm. The enzyme catalyses uridine(54) in tRNA + (6R)-5,10-methylene-5,6,7,8-tetrahydrofolate + NADH + H(+) = 5-methyluridine(54) in tRNA + (6S)-5,6,7,8-tetrahydrofolate + NAD(+). The catalysed reaction is uridine(54) in tRNA + (6R)-5,10-methylene-5,6,7,8-tetrahydrofolate + NADPH + H(+) = 5-methyluridine(54) in tRNA + (6S)-5,6,7,8-tetrahydrofolate + NADP(+). Its function is as follows. Catalyzes the folate-dependent formation of 5-methyl-uridine at position 54 (M-5-U54) in all tRNAs. The polypeptide is Methylenetetrahydrofolate--tRNA-(uracil-5-)-methyltransferase TrmFO (Caulobacter vibrioides (strain ATCC 19089 / CIP 103742 / CB 15) (Caulobacter crescentus)).